Consider the following 461-residue polypeptide: Signal recognition particle receptor FtsY (461 aa).

Residues 105 to 138 (FESLYNVAKIYHQLEKPDKALEYAQRAEKLVPYE) form a TPR repeat. GTP contacts are provided by residues 267-274 (GVNGSGKT), 349-353 (DTAGR), and 413-416 (TKLD).

It belongs to the GTP-binding SRP family. FtsY subfamily. Part of the signal recognition particle protein translocation system, which is composed of SRP and FtsY.

The protein localises to the cell inner membrane. Its subcellular location is the cytoplasm. It catalyses the reaction GTP + H2O = GDP + phosphate + H(+). Involved in targeting and insertion of nascent membrane proteins into the cytoplasmic membrane. Acts as a receptor for the complex formed by the signal recognition particle (SRP) and the ribosome-nascent chain (RNC). The protein is Signal recognition particle receptor FtsY of Aquifex aeolicus (strain VF5).